A 1001-amino-acid polypeptide reads, in one-letter code: E3 ubiquitin-protein ligase BRE1B (1001 aa).

The tract at residues 1–31 is disordered; it reads MSGLGNKRAAGDGGSGPPEKKLSREEKTTTT. Over residues 18 to 28 the composition is skewed to basic and acidic residues; the sequence is PEKKLSREEKT. N6-acetyllysine is present on lysine 20. Serine 42 bears the Phosphoserine mark. Residues 45–91 are a coiled coil; the sequence is EEIDLKVLQFKNKKLAERLEQRQACEDELRERIEKLEKRQATDDATL. The interval 116-149 is disordered; sequence GELSSAPEAPGTQEGPTCDGTPLPEPGTSELREP. 2 coiled-coil regions span residues 228–377 and 437–523; these read ARTR…LRSL and LQKK…AQTS. An N6-acetyllysine mark is found at lysine 355 and lysine 517. The disordered stretch occupies residues 516-646; the sequence is GKLRAQTSGS…EKAKVEEAKR (131 aa). Polar residues predominate over residues 520–531; that stretch reads AQTSGSTHSTPN. The residue at position 528 (serine 528) is a Phosphoserine. Residues lysine 578 and lysine 579 each participate in a glycyl lysine isopeptide (Lys-Gly) (interchain with G-Cter in SUMO2) cross-link. Serine 585 is subject to Phosphoserine. Basic and acidic residues-rich tracts occupy residues 602-619 and 633-646; these read RGREPEARPKRELREREG and RADREKAKVEEAKR. Residues 627–946 are a coiled coil; sequence VASALSRADR…EEIKEYKARL (320 aa). Residues 948-987 form an RING-type zinc finger; sequence CPCCNTRKKDAVLTKCFHVFCFECVRGRYEARQRKCPKCN.

This sequence belongs to the BRE1 family. In terms of assembly, component of the RNF20/40 complex (also known as BRE1 complex) probably composed of 2 copies of RNF20/BRE1A and 2 copies of RNF40/BRE1B. Interacts with UBE2E1/UBCH6. Interacts with RB1 and WAC.

It is found in the nucleus. The catalysed reaction is S-ubiquitinyl-[E2 ubiquitin-conjugating enzyme]-L-cysteine + [acceptor protein]-L-lysine = [E2 ubiquitin-conjugating enzyme]-L-cysteine + N(6)-ubiquitinyl-[acceptor protein]-L-lysine.. It participates in protein modification; protein ubiquitination. In terms of biological role, component of the RNF20/40 E3 ubiquitin-protein ligase complex that mediates monoubiquitination of 'Lys-120' of histone H2B (H2BK120ub1). H2BK120ub1 gives a specific tag for epigenetic transcriptional activation and is also prerequisite for histone H3 'Lys-4' and 'Lys-79' methylation (H3K4me and H3K79me, respectively). It thereby plays a central role in histone code and gene regulation. The RNF20/40 complex forms a H2B ubiquitin ligase complex in cooperation with the E2 enzyme UBE2A or UBE2B; reports about the cooperation with UBE2E1/UBCH are contradictory. Required for transcriptional activation of Hox genes. This is E3 ubiquitin-protein ligase BRE1B (RNF40) from Macaca fascicularis (Crab-eating macaque).